Here is a 198-residue protein sequence, read N- to C-terminus: Recombination protein RecR (198 aa).

The C4-type zinc-finger motif lies at 56 to 71 (CKVCGNFSEEDECVIC). One can recognise a Toprim domain in the interval 79–174 (GVICVVEEPK…RVSKLASGLP (96 aa)).

It belongs to the RecR family.

In terms of biological role, may play a role in DNA repair. It seems to be involved in an RecBC-independent recombinational process of DNA repair. It may act with RecF and RecO. This is Recombination protein RecR from Tropheryma whipplei (strain Twist) (Whipple's bacillus).